Reading from the N-terminus, the 152-residue chain is Deoxyuridine 5'-triphosphate nucleotidohydrolase (152 aa).

Residues 65–67, Asn-78, and 82–84 contribute to the substrate site; these read RSG and TID.

This sequence belongs to the dUTPase family. The cofactor is Mg(2+).

The enzyme catalyses dUTP + H2O = dUMP + diphosphate + H(+). The protein operates within pyrimidine metabolism; dUMP biosynthesis; dUMP from dCTP (dUTP route): step 2/2. Its function is as follows. This enzyme is involved in nucleotide metabolism: it produces dUMP, the immediate precursor of thymidine nucleotides and it decreases the intracellular concentration of dUTP so that uracil cannot be incorporated into DNA. This chain is Deoxyuridine 5'-triphosphate nucleotidohydrolase, found in Chlorobaculum tepidum (strain ATCC 49652 / DSM 12025 / NBRC 103806 / TLS) (Chlorobium tepidum).